A 303-amino-acid chain; its full sequence is mRNA-capping enzyme subunit beta (303 aa).

This sequence belongs to the fungal TPase family. Heterodimer. The mRNA-capping enzyme is composed of two separate chains alpha and beta, respectively a mRNA guanylyltransferase and an mRNA 5'-triphosphate monophosphatase. Requires Mg(2+) as cofactor.

The protein resides in the nucleus. It carries out the reaction a 5'-end triphospho-ribonucleoside in mRNA + H2O = a 5'-end diphospho-ribonucleoside in mRNA + phosphate + H(+). Its function is as follows. First step of mRNA capping. Converts the 5'-triphosphate end of a nascent mRNA chain into a diphosphate end. This Schizosaccharomyces pombe (strain 972 / ATCC 24843) (Fission yeast) protein is mRNA-capping enzyme subunit beta (pct1).